Reading from the N-terminus, the 373-residue chain is Thyroid hormone receptor beta (373 aa).

The tract at residues 1–18 is modulating; that stretch reads MPSSMSGYIPSYLDKDEL. Zn(2+) contacts are provided by cysteine 19, cysteine 22, cysteine 36, cysteine 39, cysteine 57, cysteine 63, cysteine 73, and cysteine 76. 2 consecutive NR C4-type zinc fingers follow at residues 19 to 39 and 57 to 81; these read CVVCGDKATGYHYRCITCEGC and CKYEGKCVIDKVTRNQCQECRFKKC. Residues 19 to 93 constitute a DNA-binding region (nuclear receptor); sequence CVVCGDKATG…VGMATDLVLD (75 aa). Positions 129 to 373 constitute an NR LBD domain; that stretch reads EEWELIQVVT…PPLFLEVFED (245 aa). Residues arginine 194, asparagine 243, and histidine 347 each contribute to the 3,3',5-triiodo-L-thyronine site. L-thyroxine is bound by residues arginine 194, asparagine 243, and histidine 347.

Belongs to the nuclear hormone receptor family. NR1 subfamily.

The protein localises to the nucleus. Its function is as follows. Nuclear hormone receptor that can act as a repressor or activator of transcription. High affinity receptor for thyroid hormones, including triiodothyronine and thyroxine. The polypeptide is Thyroid hormone receptor beta (thrb) (Aquarana catesbeiana (American bullfrog)).